Here is a 545-residue protein sequence, read N- to C-terminus: CTP synthase (545 aa).

The tract at residues 1–266 (MTKNYIFITG…DDYICNYFKL (266 aa)) is amidoligase domain. Position 14 (Ser-14) interacts with CTP. Ser-14 contacts UTP. Residues 15-20 (SLGKGI) and Asp-72 contribute to the ATP site. Positions 72 and 140 each coordinate Mg(2+). CTP contacts are provided by residues 147–149 (DIE), 187–192 (KTKPTQ), and Lys-223. UTP is bound by residues 187-192 (KTKPTQ) and Lys-223. 239 to 241 (KDV) serves as a coordination point for ATP. The Glutamine amidotransferase type-1 domain maps to 291 to 543 (VIGIIGKYIK…IKSAGKHKKN (253 aa)). L-glutamine is bound at residue Gly-352. Cys-379 acts as the Nucleophile; for glutamine hydrolysis in catalysis. Residues 380-383 (LGMQ), Glu-403, and Arg-471 each bind L-glutamine. Catalysis depends on residues His-516 and Glu-518.

The protein belongs to the CTP synthase family. In terms of assembly, homotetramer.

The enzyme catalyses UTP + L-glutamine + ATP + H2O = CTP + L-glutamate + ADP + phosphate + 2 H(+). It catalyses the reaction L-glutamine + H2O = L-glutamate + NH4(+). The catalysed reaction is UTP + NH4(+) + ATP = CTP + ADP + phosphate + 2 H(+). It participates in pyrimidine metabolism; CTP biosynthesis via de novo pathway; CTP from UDP: step 2/2. Allosterically activated by GTP, when glutamine is the substrate; GTP has no effect on the reaction when ammonia is the substrate. The allosteric effector GTP functions by stabilizing the protein conformation that binds the tetrahedral intermediate(s) formed during glutamine hydrolysis. Inhibited by the product CTP, via allosteric rather than competitive inhibition. Its function is as follows. Catalyzes the ATP-dependent amination of UTP to CTP with either L-glutamine or ammonia as the source of nitrogen. Regulates intracellular CTP levels through interactions with the four ribonucleotide triphosphates. The polypeptide is CTP synthase (Buchnera aphidicola subsp. Acyrthosiphon pisum (strain Tuc7)).